Consider the following 709-residue polypeptide: Dibasic-processing endoprotease (709 aa).

Residues 1–22 form the signal peptide; the sequence is MHPALLCGPILAIFLQFLVSSC. 2 propeptides span residues 23 to 82 and 83 to 102; these read SPLE…IRKR and GIDA…RYKR. Residues 103–668 are Lumenal-facing; sequence DASESDELLN…QPVLEPSYRE (566 aa). The 313-residue stretch at 128-440 folds into the Peptidase S8 domain; sequence QWHIFNSNNP…FGKLDASKFV (313 aa). A glycan (N-linked (GlcNAc...) asparagine) is linked at N155. Residues D162 and H200 each act as charge relay system in the active site. 2 disulfide bridges follow: C216–C363 and C308–C338. S371 acts as the Charge relay system in catalysis. One can recognise a P/Homo B domain in the interval 449-588; the sequence is VNPQTWLIAP…QLALWGESEN (140 aa). N463, N471, and N620 each carry an N-linked (GlcNAc...) asparagine glycan. A helical transmembrane segment spans residues 669-693; it reads IVAFITFFLLFAFIFVAVIWTWISA. Over 694–709 the chain is Cytoplasmic; sequence FWKAKAPPPLSQQEIA.

It belongs to the peptidase S8 family. Furin subfamily. Requires Ca(2+) as cofactor. Post-translationally, N-glycosylated.

It localises to the golgi apparatus. It is found in the trans-Golgi network membrane. Its function is as follows. Membrane-bound, subtilisin-like serine protease that processes the P-factor precursor and other precursor proteins. Essential for cell viability. Cleaves substrate on the C-terminal side of dibasic residues. The protein is Dibasic-processing endoprotease (krp1) of Schizosaccharomyces pombe (strain 972 / ATCC 24843) (Fission yeast).